The primary structure comprises 152 residues: MGARGPGPGATARRRLLALLLLLLLLPLPARAWYKHTASPRYHTVGRAAGLLMGLRRSPYMWRRALRPAAGPLAWDTFGQDVPPRGPSARNALSPGPAPRDAPLLPPGVQTLWQVRRGSFRSGIPVSAPRSPRARGSEPQPELGASSWTSAE.

An N-terminal signal peptide occupies residues Met-1–Ala-32. The propeptide occupies Ala-65–Glu-152. Disordered stretches follow at residues Gly-79–Gly-108 and Ser-122–Glu-152. A compositionally biased stretch (pro residues) spans Gly-96 to Pro-106.

It belongs to the neuropeptide B/W family.

The protein resides in the secreted. In terms of biological role, plays a regulatory role in the organization of neuroendocrine signals accessing the anterior pituitary gland. Stimulates water drinking and food intake. May play a role in the hypothalamic response to stress. This Sus scrofa (Pig) protein is Neuropeptide W (NPW).